A 280-amino-acid chain; its full sequence is uncharacterized protein (280 aa).

This is an uncharacterized protein from Acanthamoeba polyphaga mimivirus (APMV).